The sequence spans 328 residues: Versiconal hemiacetal acetate esterase (328 aa).

The Involved in the stabilization of the negatively charged intermediate by the formation of the oxyanion hole motif lies at 82 to 84 (HGG). Residues S156, D260, and H290 contribute to the active site.

Belongs to the 'GDXG' lipolytic enzyme family.

It catalyses the reaction (2S,3S)-versiconal hemiacetal acetate + H2O = (2S-3S)-versiconal hemiacetal + acetate + H(+). The catalysed reaction is (3S)-versiconol acetate + H2O = (S)-versiconol + acetate + H(+). It participates in mycotoxin biosynthesis. In terms of biological role, versiconal hemiacetal acetate esterase; part of the fragmented gene cluster that mediates the biosynthesis of dothistromin (DOTH), a polyketide toxin very similar in structure to the aflatoxin precursor, versicolorin B. The first step of the pathway is the conversion of acetate to norsolorinic acid (NOR) and requires the fatty acid synthase subunits hexA and hexB, as well as the polyketide synthase pksA. PksA combines a hexanoyl starter unit and 7 malonyl-CoA extender units to synthesize the precursor NOR. The hexanoyl starter unit is provided to the acyl-carrier protein (ACP) domain by the fungal fatty acid synthase hexA/hexB. The second step is the conversion of NOR to averantin (AVN) and requires the norsolorinic acid ketoreductase nor1, which catalyzes the dehydration of norsolorinic acid to form (1'S)-averantin. The cytochrome P450 monooxygenase avnA then catalyzes the hydroxylation of AVN to 5'hydroxyaverantin (HAVN). The next step is performed by adhA that transforms HAVN to averufin (AVF). Averufin might then be converted to hydroxyversicolorone by cypX and avfA. Hydroxyversicolorone is further converted versiconal hemiacetal acetate (VHA) by moxY. VHA is then the substrate for the versiconal hemiacetal acetate esterase est1 to yield versiconal (VAL). Versicolorin B synthase vbsA then converts VAL to versicolorin B (VERB) by closing the bisfuran ring. Then, the activity of the versicolorin B desaturase verB leads to versicolorin A (VERA). DotB, a predicted chloroperoxidase, may perform epoxidation of the A-ring of VERA. Alternatively, a cytochrome P450, such as cypX or avnA could catalyze this step. It is also possible that another, uncharacterized, cytochrome P450 enzyme is responsible for this step. Opening of the epoxide could potentially be achieved by the epoxide hydrolase epoA. However, epoA seems not to be required for DOTH biosynthesis, but other epoxide hydrolases may have the ability to complement this hydrolysis. Alternatively, opening of the epoxide ring could be achieved non-enzymatically. The next step is the deoxygenation of ring A to yield the 5,8-dihydroxyanthraquinone which is most likely catalyzed by the NADPH dehydrogenase encoded by ver1. The last stages of DOTH biosynthesis are proposed to involve hydroxylation of the bisfuran. OrdB and norB might have oxidative roles here. An alternative possibility is that cytochrome P450 monoogenases such as avnA and cypX might perform these steps in addition to previously proposed steps. This chain is Versiconal hemiacetal acetate esterase, found in Dothistroma septosporum (strain NZE10 / CBS 128990) (Red band needle blight fungus).